A 355-amino-acid chain; its full sequence is Tetraacyldisaccharide 4'-kinase (355 aa).

Position 64-71 (64-71 (YVGGTGKT)) interacts with ATP. The disordered stretch occupies residues 206-226 (NRAPQSSATPTAASGQGPRRA). Over residues 208-222 (APQSSATPTAASGQG) the composition is skewed to low complexity.

Belongs to the LpxK family.

It carries out the reaction a lipid A disaccharide + ATP = a lipid IVA + ADP + H(+). Its pathway is glycolipid biosynthesis; lipid IV(A) biosynthesis; lipid IV(A) from (3R)-3-hydroxytetradecanoyl-[acyl-carrier-protein] and UDP-N-acetyl-alpha-D-glucosamine: step 6/6. Functionally, transfers the gamma-phosphate of ATP to the 4'-position of a tetraacyldisaccharide 1-phosphate intermediate (termed DS-1-P) to form tetraacyldisaccharide 1,4'-bis-phosphate (lipid IVA). This chain is Tetraacyldisaccharide 4'-kinase, found in Bordetella petrii (strain ATCC BAA-461 / DSM 12804 / CCUG 43448).